A 633-amino-acid chain; its full sequence is Threonine--tRNA ligase (633 aa).

A TGS domain is found at 1 to 61; sequence MINVYFSDNS…TEDCKFEVIT (61 aa). The tract at residues 242 to 533 is catalytic; the sequence is DHRKIGKELE…LIEHHSGKLP (292 aa). Residues Cys333, His384, and His510 each contribute to the Zn(2+) site.

This sequence belongs to the class-II aminoacyl-tRNA synthetase family. Homodimer. Zn(2+) serves as cofactor.

Its subcellular location is the cytoplasm. It carries out the reaction tRNA(Thr) + L-threonine + ATP = L-threonyl-tRNA(Thr) + AMP + diphosphate + H(+). Functionally, catalyzes the attachment of threonine to tRNA(Thr) in a two-step reaction: L-threonine is first activated by ATP to form Thr-AMP and then transferred to the acceptor end of tRNA(Thr). Also edits incorrectly charged L-seryl-tRNA(Thr). This Ehrlichia ruminantium (strain Welgevonden) protein is Threonine--tRNA ligase.